The chain runs to 512 residues: 2,3-bisphosphoglycerate-independent phosphoglycerate mutase (512 aa).

2 residues coordinate Mn(2+): Asp11 and Ser61. Ser61 serves as the catalytic Phosphoserine intermediate. Residues His122, 152–153 (RD), Arg184, Arg190, 259–262 (RADR), and Lys332 each bind substrate. Mn(2+)-binding residues include Asp399, His403, Asp440, His441, and His459.

Belongs to the BPG-independent phosphoglycerate mutase family. Monomer. It depends on Mn(2+) as a cofactor.

It carries out the reaction (2R)-2-phosphoglycerate = (2R)-3-phosphoglycerate. It participates in carbohydrate degradation; glycolysis; pyruvate from D-glyceraldehyde 3-phosphate: step 3/5. Functionally, catalyzes the interconversion of 2-phosphoglycerate and 3-phosphoglycerate. In Francisella philomiragia subsp. philomiragia (strain ATCC 25017 / CCUG 19701 / FSC 153 / O#319-036), this protein is 2,3-bisphosphoglycerate-independent phosphoglycerate mutase.